A 273-amino-acid polypeptide reads, in one-letter code: Undecaprenyl-diphosphatase (273 aa).

7 helical membrane-spanning segments follow: residues 45-65, 90-110, 116-136, 154-173, 190-210, 222-242, and 252-272; these read AKTF…VMFW, LTLI…LIFH, LFNP…LIAA, YRQA…PGFS, YAAS…ATAL, ADFP…LVAI, and ISFI…YVVF.

This sequence belongs to the UppP family.

Its subcellular location is the cell inner membrane. It carries out the reaction di-trans,octa-cis-undecaprenyl diphosphate + H2O = di-trans,octa-cis-undecaprenyl phosphate + phosphate + H(+). Its function is as follows. Catalyzes the dephosphorylation of undecaprenyl diphosphate (UPP). Confers resistance to bacitracin. The chain is Undecaprenyl-diphosphatase from Enterobacter sp. (strain 638).